Here is a 127-residue protein sequence, read N- to C-terminus: Major sperm protein isoform beta (127 aa).

A2 is modified (N-acetylalanine). Positions 9 to 126 (DINTQPGSKI…RRKNLPIEYN (118 aa)) constitute an MSP domain.

As to quaternary structure, forms filaments 10 nm wide, with a characteristic substructure repeating axially at 9 nm. Sperm.

The protein resides in the cell projection. Its subcellular location is the pseudopodium. It is found in the cytoplasm. It localises to the cytoskeleton. Its function is as follows. Central component in molecular interactions underlying sperm crawling. Forms an extensive filament system that extends from sperm villipoda, along the leading edge of the pseudopod. This chain is Major sperm protein isoform beta, found in Ascaris suum (Pig roundworm).